A 390-amino-acid polypeptide reads, in one-letter code: Phosphopentomutase (390 aa).

Residues D11, D283, H288, D324, H325, and H336 each coordinate Mn(2+).

It belongs to the phosphopentomutase family. Requires Mn(2+) as cofactor.

The protein resides in the cytoplasm. It catalyses the reaction 2-deoxy-alpha-D-ribose 1-phosphate = 2-deoxy-D-ribose 5-phosphate. The enzyme catalyses alpha-D-ribose 1-phosphate = D-ribose 5-phosphate. The protein operates within carbohydrate degradation; 2-deoxy-D-ribose 1-phosphate degradation; D-glyceraldehyde 3-phosphate and acetaldehyde from 2-deoxy-alpha-D-ribose 1-phosphate: step 1/2. In terms of biological role, isomerase that catalyzes the conversion of deoxy-ribose 1-phosphate (dRib-1-P) and ribose 1-phosphate (Rib-1-P) to deoxy-ribose 5-phosphate (dRib-5-P) and ribose 5-phosphate (Rib-5-P), respectively. In Alkaliphilus metalliredigens (strain QYMF), this protein is Phosphopentomutase.